The chain runs to 57 residues: Large ribosomal subunit protein bL32 (57 aa).

The span at methionine 1–glutamine 19 shows a compositional bias: basic residues. The tract at residues methionine 1 to lysine 21 is disordered.

Belongs to the bacterial ribosomal protein bL32 family.

The chain is Large ribosomal subunit protein bL32 from Mycobacteroides abscessus (strain ATCC 19977 / DSM 44196 / CCUG 20993 / CIP 104536 / JCM 13569 / NCTC 13031 / TMC 1543 / L948) (Mycobacterium abscessus).